Reading from the N-terminus, the 501-residue chain is MTQAVKLASRVFHRVQLPSQLGSDSVLRSLSDIPGPSTPSFLAELFCKGGLSRLHELQVHGAARYGPIWSGSFGTLRTVYVADPALVEQLLRQESHCPERCSFSSWSEHRRRHQRACGLLTADGEEWQRLRSLLAPLLLRPQAAAGYAGTLDSVVSDLVRRLRRQRGRGSGLPDLVLDVAGEFYKFGLEGIGAVLLGSRLGCLEAEVPPDTETFIEAVGSVFVSTLLTMAMPSWLHRLIPGPWARLCRDWDQMFAFAQKHVEQREGEAAVRNQGKPEEDLPTGHHLTHFLFREKVSVQSIVGNVTELLLAGVDTVSNTLSWALYELSRHPEVQSALHSEITGAVNPGSYAHLQATALSQLPLLKAVIKEVLRLYPVVPGNSRVPDRDICVGNYVIPQDTLVSLCHYATSRDPAQFREPNSFNPARWLGEGPAPHPFASLPFGFGKRSCIGRRLAELELQMALAQILTHFEVLPEPGALPVKPMTRTVLVPERSIHLQFVDR.

Cys-448 contacts heme.

This sequence belongs to the cytochrome P450 family. Heme is required as a cofactor. As to expression, kidney.

Its subcellular location is the mitochondrion membrane. The catalysed reaction is calcidiol + 2 reduced [adrenodoxin] + O2 + 2 H(+) = calcitriol + 2 oxidized [adrenodoxin] + H2O. It catalyses the reaction secalciferol + 2 reduced [adrenodoxin] + O2 + 2 H(+) = calcitetrol + 2 oxidized [adrenodoxin] + H2O. Its pathway is hormone biosynthesis; cholecalciferol biosynthesis. Its function is as follows. Catalyzes the conversion of 25-hydroxyvitamin D3 (25(OH)D3) to 1-alpha,25-dihydroxyvitamin D3 (1alpha,25(OH)(2)D3), and of 24,25-dihydroxyvitamin D3 (24,25(OH)(2)D3) to 1-alpha,24,25-trihydroxyvitamin D3 (1alpha,24,25(OH)(3)D3). Is also active with 25-hydroxy-24-oxo-vitamin D3. Plays an important role in normal bone growth, calcium metabolism, and tissue differentiation. The protein is 25-hydroxyvitamin D-1 alpha hydroxylase, mitochondrial (Cyp27b1) of Rattus norvegicus (Rat).